A 179-amino-acid chain; its full sequence is Ubiquitin-conjugating enzyme E2 C (179 aa).

Residues 1 to 31 are disordered; sequence MASQNRDPVAASVAAARKGAEPSGGAARGPV. N-acetylalanine is present on alanine 2. Position 3 is a phosphoserine (serine 3). Positions 30–175 constitute a UBC core domain; that stretch reads PVGKRLQQEL…LQETYSKQVS (146 aa). Catalysis depends on cysteine 114, which acts as the Glycyl thioester intermediate.

This sequence belongs to the ubiquitin-conjugating enzyme family. In terms of assembly, component of the APC/C complex, composed of at least 14 distinct subunits that assemble into a complex of at least 19 chains with a combined molecular mass of around 1.2 MDa. Within this complex, directly interacts with ANAPC2. Post-translationally, autoubiquitinated by the APC/C complex, leading to its degradation by the proteasome. Its degradation plays a central role in APC/C regulation, allowing cyclin-A accumulation before S phase entry. APC/C substrates inhibit the autoubiquitination of UBE2C/UBCH10 but not its E2 function, hence APC/C remaining active until its substrates have been destroyed.

It carries out the reaction S-ubiquitinyl-[E1 ubiquitin-activating enzyme]-L-cysteine + [E2 ubiquitin-conjugating enzyme]-L-cysteine = [E1 ubiquitin-activating enzyme]-L-cysteine + S-ubiquitinyl-[E2 ubiquitin-conjugating enzyme]-L-cysteine.. It catalyses the reaction S-ubiquitinyl-[E1 ubiquitin-activating enzyme]-L-cysteine + [acceptor protein]-L-lysine = [E1 ubiquitin-activating enzyme]-L-cysteine + N(6)-monoubiquitinyl-[acceptor protein]-L-lysine.. It participates in protein modification; protein ubiquitination. Its function is as follows. Accepts ubiquitin from the E1 complex and catalyzes its covalent attachment to other proteins. In vitro catalyzes 'Lys-11'- and 'Lys-48'-linked polyubiquitination. Acts as an essential factor of the anaphase promoting complex/cyclosome (APC/C), a cell cycle-regulated ubiquitin ligase that controls progression through mitosis. Acts by initiating 'Lys-11'-linked polyubiquitin chains on APC/C substrates, leading to the degradation of APC/C substrates by the proteasome and promoting mitotic exit. The chain is Ubiquitin-conjugating enzyme E2 C (UBE2C) from Bos taurus (Bovine).